The following is a 116-amino-acid chain: Large ribosomal subunit protein bL20 (116 aa).

This sequence belongs to the bacterial ribosomal protein bL20 family.

Its function is as follows. Binds directly to 23S ribosomal RNA and is necessary for the in vitro assembly process of the 50S ribosomal subunit. It is not involved in the protein synthesizing functions of that subunit. This is Large ribosomal subunit protein bL20 from Picosynechococcus sp. (strain ATCC 27264 / PCC 7002 / PR-6) (Agmenellum quadruplicatum).